The sequence spans 449 residues: Biotin carboxylase (449 aa).

The region spanning 1-445 (MLDKIVIANR…NIHYLEKKLG (445 aa)) is the Biotin carboxylation domain. ATP contacts are provided by residues Lys116, Lys159, 165-166 (GG), 201-204 (EKYL), His209, and His236. The 198-residue stretch at 120–317 (IAAMKKAGVP…LIKEQLRIAA (198 aa)) folds into the ATP-grasp domain. Lys238 contributes to the hydrogencarbonate binding site. The ATP site is built by Glu276 and Glu288. Glu276, Glu288, and Asn290 together coordinate Mg(2+). Mn(2+)-binding residues include Glu276, Glu288, and Asn290. Hydrogencarbonate contacts are provided by Arg292, Val295, and Arg338. The active site involves Arg292. Arg338 contacts biotin.

In terms of assembly, acetyl-CoA carboxylase is a heterohexamer of biotin carboxyl carrier protein, biotin carboxylase and the two subunits of carboxyl transferase in a 2:2 complex. Requires Mg(2+) as cofactor. Mn(2+) serves as cofactor.

It carries out the reaction N(6)-biotinyl-L-lysyl-[protein] + hydrogencarbonate + ATP = N(6)-carboxybiotinyl-L-lysyl-[protein] + ADP + phosphate + H(+). It participates in lipid metabolism; malonyl-CoA biosynthesis; malonyl-CoA from acetyl-CoA: step 1/1. Functionally, this protein is a component of the acetyl coenzyme A carboxylase complex; first, biotin carboxylase catalyzes the carboxylation of the carrier protein and then the transcarboxylase transfers the carboxyl group to form malonyl-CoA. In Escherichia coli O157:H7, this protein is Biotin carboxylase (accC).